We begin with the raw amino-acid sequence, 174 residues long: Co-chaperone protein HscB homolog (174 aa).

Residues 2–74 (NYFELFKFSP…IRRAEHLLSL (73 aa)) form the J domain.

It belongs to the HscB family. Interacts with HscA and stimulates its ATPase activity.

In terms of biological role, co-chaperone involved in the maturation of iron-sulfur cluster-containing proteins. Seems to help targeting proteins to be folded toward HscA. The polypeptide is Co-chaperone protein HscB homolog (Shewanella sp. (strain W3-18-1)).